Reading from the N-terminus, the 556-residue chain is Oxygen-dependent choline dehydrogenase (556 aa).

4–33 is an FAD binding site; that stretch reads DYIIIGAGSAGNVLATRLTEDPNTSVLLLE. The Proton acceptor role is filled by histidine 473.

It belongs to the GMC oxidoreductase family. The cofactor is FAD.

It catalyses the reaction choline + A = betaine aldehyde + AH2. The enzyme catalyses betaine aldehyde + NAD(+) + H2O = glycine betaine + NADH + 2 H(+). It participates in amine and polyamine biosynthesis; betaine biosynthesis via choline pathway; betaine aldehyde from choline (cytochrome c reductase route): step 1/1. Functionally, involved in the biosynthesis of the osmoprotectant glycine betaine. Catalyzes the oxidation of choline to betaine aldehyde and betaine aldehyde to glycine betaine at the same rate. This chain is Oxygen-dependent choline dehydrogenase, found in Escherichia coli O139:H28 (strain E24377A / ETEC).